The sequence spans 59 residues: MNQARIWTVVKPTVGLPLLLGSVTVIAILVHFAVLSHTTWFSKYWNGKAAAIESSVNVG.

Topologically, residues 1–11 (MNQARIWTVVK) are cytoplasmic. A helical membrane pass occupies residues 12-35 (PTVGLPLLLGSVTVIAILVHFAVL). His31 is a binding site for a bacteriochlorophyll. The Periplasmic portion of the chain corresponds to 36-59 (SHTTWFSKYWNGKAAAIESSVNVG).

This sequence belongs to the antenna complex alpha subunit family. In terms of assembly, the core complex is formed by different alpha and beta chains, binding bacteriochlorophyll molecules, and arranged most probably in tetrameric structures disposed around the reaction center. The non-pigmented gamma chains may constitute additional components.

It is found in the cell inner membrane. Functionally, antenna complexes are light-harvesting systems, which transfer the excitation energy to the reaction centers. In Rhodopseudomonas palustris (strain ATCC BAA-98 / CGA009), this protein is Light-harvesting protein B-800-850 alpha chain A (pucAA).